Reading from the N-terminus, the 209-residue chain is V-type ATP synthase subunit D 2 (209 aa).

Belongs to the V-ATPase D subunit family.

Produces ATP from ADP in the presence of a proton gradient across the membrane. The protein is V-type ATP synthase subunit D 2 (atpD2) of Treponema pallidum (strain Nichols).